A 101-amino-acid chain; its full sequence is NADH-quinone oxidoreductase subunit K (101 aa).

3 helical membrane passes run 4–24 (LSDY…GIFV), 29–49 (IITL…NFVA), and 61–81 (IFVF…LAIL).

Belongs to the complex I subunit 4L family. In terms of assembly, NDH-1 is composed of 14 different subunits. Subunits NuoA, H, J, K, L, M, N constitute the membrane sector of the complex.

It is found in the cell inner membrane. The catalysed reaction is a quinone + NADH + 5 H(+)(in) = a quinol + NAD(+) + 4 H(+)(out). In terms of biological role, NDH-1 shuttles electrons from NADH, via FMN and iron-sulfur (Fe-S) centers, to quinones in the respiratory chain. The immediate electron acceptor for the enzyme in this species is believed to be ubiquinone. Couples the redox reaction to proton translocation (for every two electrons transferred, four hydrogen ions are translocated across the cytoplasmic membrane), and thus conserves the redox energy in a proton gradient. The polypeptide is NADH-quinone oxidoreductase subunit K (Ruthia magnifica subsp. Calyptogena magnifica).